Consider the following 203-residue polypeptide: Ras-related protein Rab-18 (203 aa).

GTP contacts are provided by Ser-20, Gly-23, Lys-24, Ser-25, Ser-26, Asp-37, Pro-38, Thr-43, Gly-69, Lys-126, Asp-128, and Ala-155. The Effector region motif lies at 40 to 48 (QAATIGVDF). S-geranylgeranyl cysteine attachment occurs at residues Cys-201 and Cys-203. At Cys-203 the chain carries Cysteine methyl ester.

The protein belongs to the small GTPase superfamily. Rab family.

It carries out the reaction GTP + H2O = GDP + phosphate + H(+). Functionally, the small GTPases Rab are key regulators of intracellular membrane trafficking, from the formation of transport vesicles to their fusion with membranes. Rabs cycle between an inactive GDP-bound form and an active GTP-bound form that is able to recruit to membranes different sets of downstream effectors directly responsible for vesicle formation, movement, tethering and fusion. Plays a role in apical endocytosis/recycling. May be implicated in transport between the plasma membrane and early endosomes. Plays a role in the shedding of pathogen spores from intestinal cells. The sequence is that of Ras-related protein Rab-18 (rab-18) from Caenorhabditis elegans.